The chain runs to 48 residues: MAKRKANHVINGMNNAKRQGNGAGYIENDQHILTEAERQNNKKRKTNQ.

The disordered stretch occupies residues 1–48; that stretch reads MAKRKANHVINGMNNAKRQGNGAGYIENDQHILTEAERQNNKKRKTNQ. Basic and acidic residues predominate over residues 28 to 40; it reads NDQHILTEAERQN.

This sequence belongs to the SspO family.

The protein resides in the spore core. This is Small, acid-soluble spore protein O from Bacillus licheniformis (strain ATCC 14580 / DSM 13 / JCM 2505 / CCUG 7422 / NBRC 12200 / NCIMB 9375 / NCTC 10341 / NRRL NRS-1264 / Gibson 46).